The primary structure comprises 317 residues: Malate dehydrogenase (317 aa).

Residues 10-15 and D34 each bind NAD(+); that span reads GGGQIG. Residues R83 and R89 each contribute to the substrate site. NAD(+) contacts are provided by residues N96 and 119-121; that span reads ISN. Substrate is bound by residues N121 and R152. H176 serves as the catalytic Proton acceptor.

The protein belongs to the LDH/MDH superfamily. MDH type 3 family.

The catalysed reaction is (S)-malate + NAD(+) = oxaloacetate + NADH + H(+). Functionally, catalyzes the reversible oxidation of malate to oxaloacetate. The protein is Malate dehydrogenase of Geobacter sulfurreducens (strain ATCC 51573 / DSM 12127 / PCA).